A 162-amino-acid polypeptide reads, in one-letter code: NADH-quinone oxidoreductase subunit I (162 aa).

4Fe-4S ferredoxin-type domains follow at residues 54-83 (RRYE…IESE) and 93-122 (TRYD…ETQI). Residues Cys63, Cys66, Cys69, Cys73, Cys102, Cys105, Cys108, and Cys112 each coordinate [4Fe-4S] cluster.

The protein belongs to the complex I 23 kDa subunit family. As to quaternary structure, NDH-1 is composed of 14 different subunits. Subunits NuoA, H, J, K, L, M, N constitute the membrane sector of the complex. [4Fe-4S] cluster is required as a cofactor.

Its subcellular location is the cell inner membrane. It carries out the reaction a quinone + NADH + 5 H(+)(in) = a quinol + NAD(+) + 4 H(+)(out). NDH-1 shuttles electrons from NADH, via FMN and iron-sulfur (Fe-S) centers, to quinones in the respiratory chain. The immediate electron acceptor for the enzyme in this species is believed to be ubiquinone. Couples the redox reaction to proton translocation (for every two electrons transferred, four hydrogen ions are translocated across the cytoplasmic membrane), and thus conserves the redox energy in a proton gradient. The polypeptide is NADH-quinone oxidoreductase subunit I (Burkholderia cenocepacia (strain HI2424)).